The primary structure comprises 569 residues: Urease subunit alpha (569 aa).

Residues 131-569 (GGMDAHIHYI…LPMAQRYFLF (439 aa)) form the Urease domain. Ni(2+) is bound by residues His-136, His-138, and Lys-218. The residue at position 218 (Lys-218) is an N6-carboxylysine. His-220 is a binding site for substrate. 2 residues coordinate Ni(2+): His-247 and His-273. His-321 (proton donor) is an active-site residue. Residue Asp-361 coordinates Ni(2+).

This sequence belongs to the metallo-dependent hydrolases superfamily. Urease alpha subunit family. As to quaternary structure, heterotrimer of UreA (gamma), UreB (beta) and UreC (alpha) subunits. Three heterotrimers associate to form the active enzyme. It depends on Ni cation as a cofactor. Post-translationally, carboxylation allows a single lysine to coordinate two nickel ions.

It localises to the cytoplasm. It carries out the reaction urea + 2 H2O + H(+) = hydrogencarbonate + 2 NH4(+). It functions in the pathway nitrogen metabolism; urea degradation; CO(2) and NH(3) from urea (urease route): step 1/1. This chain is Urease subunit alpha, found in Agrobacterium fabrum (strain C58 / ATCC 33970) (Agrobacterium tumefaciens (strain C58)).